Consider the following 350-residue polypeptide: C4-dicarboxylate-binding protein DctB (350 aa).

The first 18 residues, 1–18 (MKSLLACLALMIAGIATA), serve as a signal peptide directing secretion.

Belongs to the bacterial solute-binding protein 7 family.

Its subcellular location is the secreted. Part of the binding-protein-dependent transport system for uptake of C4-dicarboxylates. Responsible for growth on fumarate and succinate but not malate. Is not directly involved in C4-dicarboxylate uptake, but plays a sensory role in the DctS/DctR two-component system which regulates the expression of the dctA C4-dicarboxylate transporter. This chain is C4-dicarboxylate-binding protein DctB (dctB), found in Bacillus subtilis (strain 168).